We begin with the raw amino-acid sequence, 209 residues long: GTP-binding nuclear protein Ran1B (209 aa).

The Small GTPase Ran-type domain occupies 1-162; the sequence is NFKLVIVGDG…LYLARKLAGD (162 aa). A GTP-binding site is contributed by 9–16; sequence DGGTGKTT. Residues 28 to 36 are switch-I; the sequence is KKYEPTIGV. GTP-binding positions include Gly-59, 113 to 116, and 141 to 143; these read NKVD and SAK. Positions 59–75 are switch-II; it reads GQEKFGGLRDGYYIHGQ. Low complexity predominate over residues 187 to 200; the sequence is QHEAELAAAASQPL. Residues 187–209 form a disordered region; it reads QHEAELAAAASQPLPDDDDDAFD.

It belongs to the small GTPase superfamily. Ran family. Found in a nuclear export complex with RanGTP, exportin and pre-miRNA.

It is found in the nucleus. Functionally, GTP-binding protein involved in nucleocytoplasmic transport. Required for the import of protein into the nucleus and also for RNA export. Involved in chromatin condensation and control of cell cycle. The chain is GTP-binding nuclear protein Ran1B (RAN1B) from Lotus japonicus (Lotus corniculatus var. japonicus).